The chain runs to 1066 residues: Ankyrin repeat protein nuc-2 (1066 aa).

Positions 1–166 constitute an SPX domain; it reads MKFGKQIQKR…KSKTKELYLS (166 aa). 7 ANK repeats span residues 268–298, 336–366, 370–399, 403–432, 435–465, 470–499, and 503–532; these read RVTRTFLASINEGSLEALKVLLDTGLVDIQS, YGRVPLHYASMHGRLDMIDALLNASPKTINL, DNFTPLVHSIVRNHLECVGRLLERSARIDP, TDHVPLNLACQHGSVAIVELLLKHGAKILA, EGLYPQHLVARSGQTPEILVLLKQYGADLDQ, YGWTPLVHAASEGNVPCLQALLETGADPNI, and KDLPAMYYAAWEGHLECMKLLTPAKKEKAA. Residues 717-1048 enclose the GP-PDE domain; it reads ITDFETYWKA…DPFPKLPKGV (332 aa). The tract at residues 923–963 is disordered; it reads KQQQQGSCSKGDGDEDMGGTTAASRREAADERTLQSDGRRT. A compositionally biased stretch (basic and acidic residues) spans 946-962; the sequence is SRREAADERTLQSDGRR.

In terms of biological role, controls phosphorus acquisition. The protein is Ankyrin repeat protein nuc-2 (nuc-2) of Neurospora crassa (strain ATCC 24698 / 74-OR23-1A / CBS 708.71 / DSM 1257 / FGSC 987).